Consider the following 460-residue polypeptide: Protein Peter pan (460 aa).

One can recognise a Brix domain in the interval 28 to 290; it reads PHSFVIHRGL…LIKIEEGLLT (263 aa). 2 positions are modified to phosphoserine: S237 and S239. Positions 295–350 form a coiled coil; the sequence is YHDHVVKTEDEKETLRKLVEKKRKQKEQRKKEQAENRARNLKLKKDEKWAAKRAAE. Residues 315–460 are disordered; the sequence is KKRKQKEQRK…FDHRKSRKSK (146 aa). Composition is skewed to basic and acidic residues over residues 323–355 and 401–446; these read RKKE…RTDS and AKLD…DPKN. Position 353 is a phosphothreonine (T353). Phosphoserine is present on S355. The span at 447-460 shows a compositional bias: basic residues; that stretch reads KRAKFDHRKSRKSK.

The protein belongs to the PPAN family. As to expression, ubiquitous.

Required for initiation of larval growth and normal mitotic growth but is not absolutely required for general biosynthesis or DNA replication. Required for progression of normal oogenesis and maturation of some imaginal tissues into adult structures. The sequence is that of Protein Peter pan (ppan) from Drosophila melanogaster (Fruit fly).